A 447-amino-acid polypeptide reads, in one-letter code: Na(+)-translocating NADH-quinone reductase subunit A (447 aa).

This sequence belongs to the NqrA family. Composed of six subunits; NqrA, NqrB, NqrC, NqrD, NqrE and NqrF.

It carries out the reaction a ubiquinone + n Na(+)(in) + NADH + H(+) = a ubiquinol + n Na(+)(out) + NAD(+). In terms of biological role, NQR complex catalyzes the reduction of ubiquinone-1 to ubiquinol by two successive reactions, coupled with the transport of Na(+) ions from the cytoplasm to the periplasm. NqrA to NqrE are probably involved in the second step, the conversion of ubisemiquinone to ubiquinol. This Klebsiella pneumoniae (strain 342) protein is Na(+)-translocating NADH-quinone reductase subunit A.